The sequence spans 503 residues: uncharacterized protein (503 aa).

Disordered stretches follow at residues 1–26 and 132–156; these read MADD…SPTT and DQQQ…DNSM. The span at 16–26 shows a compositional bias: low complexity; that stretch reads AQSSVPTSPTT. Over residues 147–156 the composition is skewed to polar residues; it reads TPNSVDDNSM.

This is an uncharacterized protein from Caenorhabditis elegans.